We begin with the raw amino-acid sequence, 324 residues long: Acetyl-coenzyme A carboxylase carboxyl transferase subunit alpha (324 aa).

The CoA carboxyltransferase C-terminal domain occupies 44–298; that stretch reads RFQNQLVKLQ…KKELTEQLDS (255 aa).

This sequence belongs to the AccA family. As to quaternary structure, acetyl-CoA carboxylase is a heterohexamer composed of biotin carboxyl carrier protein (accB), biotin carboxylase (accC) and two subunits each of ACCase subunit alpha (accA) and ACCase subunit beta (accD).

It localises to the plastid. The protein localises to the chloroplast. It catalyses the reaction N(6)-carboxybiotinyl-L-lysyl-[protein] + acetyl-CoA = N(6)-biotinyl-L-lysyl-[protein] + malonyl-CoA. Its pathway is lipid metabolism; malonyl-CoA biosynthesis; malonyl-CoA from acetyl-CoA: step 1/1. Component of the acetyl coenzyme A carboxylase (ACC) complex. First, biotin carboxylase catalyzes the carboxylation of biotin on its carrier protein (BCCP) and then the CO(2) group is transferred by the carboxyltransferase to acetyl-CoA to form malonyl-CoA. In Pyropia yezoensis (Susabi-nori), this protein is Acetyl-coenzyme A carboxylase carboxyl transferase subunit alpha.